We begin with the raw amino-acid sequence, 193 residues long: Imidazoleglycerol-phosphate dehydratase (193 aa).

The protein belongs to the imidazoleglycerol-phosphate dehydratase family.

Its subcellular location is the cytoplasm. The enzyme catalyses D-erythro-1-(imidazol-4-yl)glycerol 3-phosphate = 3-(imidazol-4-yl)-2-oxopropyl phosphate + H2O. It participates in amino-acid biosynthesis; L-histidine biosynthesis; L-histidine from 5-phospho-alpha-D-ribose 1-diphosphate: step 6/9. The polypeptide is Imidazoleglycerol-phosphate dehydratase (Saccharolobus islandicus (strain Y.N.15.51 / Yellowstone #2) (Sulfolobus islandicus)).